The primary structure comprises 149 residues: Lipoprotein signal peptidase (149 aa).

A run of 2 helical transmembrane segments spans residues 58-78 and 85-105; these read WFFIAITAVVVIGIVISLIRL and ASLALSFVLGGAVGNFIDRAM. Residues Asp-111 and Asp-127 contribute to the active site. Residues 122–142 traverse the membrane as a helical segment; that stretch reads IFNVADMAITIGVGILLLDVF.

This sequence belongs to the peptidase A8 family.

Its subcellular location is the cell membrane. It catalyses the reaction Release of signal peptides from bacterial membrane prolipoproteins. Hydrolyzes -Xaa-Yaa-Zaa-|-(S,diacylglyceryl)Cys-, in which Xaa is hydrophobic (preferably Leu), and Yaa (Ala or Ser) and Zaa (Gly or Ala) have small, neutral side chains.. The protein operates within protein modification; lipoprotein biosynthesis (signal peptide cleavage). Functionally, this protein specifically catalyzes the removal of signal peptides from prolipoproteins. The sequence is that of Lipoprotein signal peptidase from Brevibacillus brevis (strain 47 / JCM 6285 / NBRC 100599).